The following is a 351-amino-acid chain: C(7)-cyclitol 7-kinase (351 aa).

The protein belongs to the ROK (NagC/XylR) family.

It catalyses the reaction valienone + ATP = valienone 7-phosphate + ADP + H(+). It carries out the reaction validone + ATP = validone 7-phosphate + ADP + H(+). In terms of biological role, involved in the biosynthesis of the antifungal agent validamycin A. Catalyzes the phosphorylation of valienone and validone to their 7-phosphate derivatives. In Streptomyces hygroscopicus subsp. limoneus, this protein is C(7)-cyclitol 7-kinase.